The following is an 838-amino-acid chain: Adenylate cyclase (838 aa).

The segment at 1 to 541 (MNYDLFSAQK…DLRLSFPVTV (541 aa)) is catalytic. Positions 547–838 (EDLTHACEIR…VPFHSRLAMS (292 aa)) are regulatory.

The protein belongs to the adenylyl cyclase class-1 family.

The protein localises to the cytoplasm. The catalysed reaction is ATP = 3',5'-cyclic AMP + diphosphate. This Pasteurella multocida (strain Pm70) protein is Adenylate cyclase (cya).